We begin with the raw amino-acid sequence, 545 residues long: Arginine-containing cyclodipeptide synthase ateA (545 aa).

Over residues 390 to 425 (GNQQTPTQSADMDSTVSHRQQQPASSRSYTSKQNQM) the composition is skewed to polar residues. Residues 390 to 433 (GNQQTPTQSADMDSTVSHRQQQPASSRSYTSKQNQMPRPLVISV) form a disordered region. A Conserved DDXXE motif motif is present at residues 434-438 (DDPSE).

It belongs to the arginine-containing cyclodipeptide synthase family.

It carries out the reaction L-glutamyl-tRNA(Glu) + L-arginyl-tRNA(Arg) = cyclo(L-arginyl-L-glutamyl) + tRNA(Glu) + tRNA(Arg) + 2 H(+). It functions in the pathway secondary metabolite biosynthesis. Its function is as follows. Arginine-containing cyclodipeptide synthase; part of the cluster that mediates the biosynthesis of a highly modified cyclo-arginine-glutamate dipeptide (cRE). Within the pathway, ateA acts as the scaffold-generating enzyme and is responsible for formation of the cyclo-Arg-Glu diketopiperazine (cRW) from L-arginyl-tRNA(Arg) + L-glutamyl-tRNA(Glu). Additional enzymes from the cluster then further modify the cyclo-Arg-Glu diketopiperazine (cRW) scaffold. The polypeptide is Arginine-containing cyclodipeptide synthase ateA (Aspergillus terreus).